The sequence spans 222 residues: Dual specificity phosphatase 29 (222 aa).

In terms of domain architecture, Tyrosine-protein phosphatase spans 54–202 (HVNEVWPKLY…LRELDKQLVQ (149 aa)). 146 to 153 (HCAMGRSR) contacts substrate. The active-site Phosphocysteine intermediate is the C147. The segment at 201–222 (VQQRRGAQHRGEAGEKAGEKEP) is disordered. The span at 209-222 (HRGEAGEKAGEKEP) shows a compositional bias: basic and acidic residues.

Belongs to the protein-tyrosine phosphatase family. Non-receptor class dual specificity subfamily. Homodimer. Interacts with PRKAA2.

The protein localises to the cytoplasm. Its subcellular location is the nucleus. The enzyme catalyses O-phospho-L-tyrosyl-[protein] + H2O = L-tyrosyl-[protein] + phosphate. The catalysed reaction is O-phospho-L-seryl-[protein] + H2O = L-seryl-[protein] + phosphate. It catalyses the reaction O-phospho-L-threonyl-[protein] + H2O = L-threonyl-[protein] + phosphate. Dual specificity phosphatase able to dephosphorylate phosphotyrosine, phosphoserine and phosphothreonine residues within the same substrate, with a preference for phosphotyrosine as a substrate. Involved in the modulation of intracellular signaling cascades. In skeletal muscle regulates systemic glucose homeostasis by activating, AMPK, an energy sensor protein kinase. Affects MAP kinase signaling though modulation of the MAPK1/2 cascade in skeletal muscle promoting muscle cell differentiation, development and atrophy. The protein is Dual specificity phosphatase 29 (DUSP29) of Sus scrofa (Pig).